Here is a 318-residue protein sequence, read N- to C-terminus: Biotin synthase (318 aa).

The region spanning 44-273 (LCGKKFNLCT…EKQIRLAGGR (230 aa)) is the Radical SAM core domain. Residues Cys62, Cys66, and Cys69 each coordinate [4Fe-4S] cluster. Ser106, Cys138, Cys198, and Arg268 together coordinate [2Fe-2S] cluster.

The protein belongs to the radical SAM superfamily. Biotin synthase family. Homodimer. The cofactor is [4Fe-4S] cluster. [2Fe-2S] cluster is required as a cofactor.

It carries out the reaction (4R,5S)-dethiobiotin + (sulfur carrier)-SH + 2 reduced [2Fe-2S]-[ferredoxin] + 2 S-adenosyl-L-methionine = (sulfur carrier)-H + biotin + 2 5'-deoxyadenosine + 2 L-methionine + 2 oxidized [2Fe-2S]-[ferredoxin]. The protein operates within cofactor biosynthesis; biotin biosynthesis; biotin from 7,8-diaminononanoate: step 2/2. Its function is as follows. Catalyzes the conversion of dethiobiotin (DTB) to biotin by the insertion of a sulfur atom into dethiobiotin via a radical-based mechanism. This chain is Biotin synthase, found in Clostridium botulinum (strain Alaska E43 / Type E3).